We begin with the raw amino-acid sequence, 708 residues long: Protein psiF (708 aa).

The first 19 residues, 1 to 19 (MKYLFIAIILILYCSFTKA), serve as a signal peptide directing secretion. The Extracellular portion of the chain corresponds to 20–643 (DQKKFLVNMY…QSTAVKVGVG (624 aa)). N78, N116, N222, N317, N318, N371, N498, and N600 each carry an N-linked (GlcNAc...) asparagine glycan. Residues 103–263 (TQTAGSQNYY…YDYCGICNGK (161 aa)) enclose the PA14 domain. A helical transmembrane segment spans residues 644–664 (IGAAAAAGIAIGGAVAAGLAI). At 665 to 708 (FGGKKAYDTWKTSRGNVMTGSQSNPLYTQNQNNGNNPLYSAPAE) the chain is on the cytoplasmic side. Residues 682–702 (MTGSQSNPLYTQNQNNGNNPL) show a composition bias toward polar residues. The disordered stretch occupies residues 682–708 (MTGSQSNPLYTQNQNNGNNPLYSAPAE).

Belongs to the prespore-cell-inducing factor family. Forms a complex with dicB.

It is found in the membrane. The protein localises to the secreted. Acts as a quorum sensing protein regulating discoidin gene expression during growth and development. D.discoideum is a single-celled amoebae and switches to multicellular development when food becomes limited. As the growing cells reach a high density, they begin expressing discoidin genes. The ability of psiF/dicA to induce discoidin gene expression when present in conditioned medium, suggests that it allows cells to sense their local density. The protein is Protein psiF (psiF) of Dictyostelium discoideum (Social amoeba).